The primary structure comprises 321 residues: Aspartate carbamoyltransferase catalytic subunit (321 aa).

Carbamoyl phosphate contacts are provided by Arg65 and Thr66. Position 93 (Lys93) interacts with L-aspartate. Carbamoyl phosphate contacts are provided by Arg115, His143, and Gln146. The L-aspartate site is built by Arg176 and Arg230. The carbamoyl phosphate site is built by Gly271 and Pro272.

The protein belongs to the aspartate/ornithine carbamoyltransferase superfamily. ATCase family. As to quaternary structure, heterododecamer (2C3:3R2) of six catalytic PyrB chains organized as two trimers (C3), and six regulatory PyrI chains organized as three dimers (R2).

The enzyme catalyses carbamoyl phosphate + L-aspartate = N-carbamoyl-L-aspartate + phosphate + H(+). The protein operates within pyrimidine metabolism; UMP biosynthesis via de novo pathway; (S)-dihydroorotate from bicarbonate: step 2/3. Its function is as follows. Catalyzes the condensation of carbamoyl phosphate and aspartate to form carbamoyl aspartate and inorganic phosphate, the committed step in the de novo pyrimidine nucleotide biosynthesis pathway. This chain is Aspartate carbamoyltransferase catalytic subunit, found in Bartonella tribocorum (strain CIP 105476 / IBS 506).